The following is a 350-amino-acid chain: 2-oxoglutarate-dependent ethylene/succinate-forming enzyme (350 aa).

A Fe2OG dioxygenase domain is found at 166–286 (GWHHMRVLRF…RFACAYFHEP (121 aa)). 2 residues coordinate Fe cation: His189 and His268.

This sequence belongs to the iron/ascorbate-dependent oxidoreductase family. In terms of assembly, monomer. The cofactor is Fe(2+).

It carries out the reaction 2-oxoglutarate + O2 + 2 H(+) = ethene + 3 CO2 + H2O. The catalysed reaction is L-arginine + 2-oxoglutarate + O2 = guanidine + L-glutamate 5-semialdehyde + succinate + CO2. It participates in alkene biosynthesis; ethylene biosynthesis via 2-oxoglutarate. In terms of biological role, simultaneously catalyzes two reactions, namely formation of ethylene and of succinate from 2-oxoglutarate. The protein is 2-oxoglutarate-dependent ethylene/succinate-forming enzyme (efe) of Pseudomonas amygdali pv. sesami (Pseudomonas syringae pv. sesami).